Here is a 385-residue protein sequence, read N- to C-terminus: Flap endonuclease 1 (385 aa).

Residues 1 to 104 (MGILGLSKLI…GELAKRAERR (104 aa)) are N-domain. Aspartate 34 lines the Mg(2+) pocket. Positions 47 and 70 each coordinate DNA. Aspartate 86, glutamate 158, glutamate 160, aspartate 179, and aspartate 181 together coordinate Mg(2+). The I-domain stretch occupies residues 122–253 (GIEKFNRRLV…KRAIELINTY (132 aa)). Glutamate 158 contacts DNA. Residues glycine 231 and aspartate 233 each coordinate DNA. Aspartate 233 serves as a coordination point for Mg(2+). The segment at 336 to 344 (TQVRLDSFF) is interaction with PCNA. The tract at residues 346-385 (TLPSTPNATNAAKRKAEEAKKSANNKKAKTSGGGRGRRPK) is disordered. Residues 368-385 (ANNKKAKTSGGGRGRRPK) are compositionally biased toward basic residues.

This sequence belongs to the XPG/RAD2 endonuclease family. FEN1 subfamily. Interacts with PCNA. Three molecules of FEN1 bind to one PCNA trimer with each molecule binding to one PCNA monomer. PCNA stimulates the nuclease activity without altering cleavage specificity. Mg(2+) is required as a cofactor. Phosphorylated. Phosphorylation upon DNA damage induces relocalization to the nuclear plasma.

The protein resides in the nucleus. Its subcellular location is the nucleolus. It is found in the nucleoplasm. It localises to the mitochondrion. Functionally, structure-specific nuclease with 5'-flap endonuclease and 5'-3' exonuclease activities involved in DNA replication and repair. During DNA replication, cleaves the 5'-overhanging flap structure that is generated by displacement synthesis when DNA polymerase encounters the 5'-end of a downstream Okazaki fragment. It enters the flap from the 5'-end and then tracks to cleave the flap base, leaving a nick for ligation. Also involved in the long patch base excision repair (LP-BER) pathway, by cleaving within the apurinic/apyrimidinic (AP) site-terminated flap. Acts as a genome stabilization factor that prevents flaps from equilibrating into structures that lead to duplications and deletions. Also possesses 5'-3' exonuclease activity on nicked or gapped double-stranded DNA, and exhibits RNase H activity. Also involved in replication and repair of rDNA and in repairing mitochondrial DNA. This is Flap endonuclease 1 from Drosophila melanogaster (Fruit fly).